Here is a 308-residue protein sequence, read N- to C-terminus: Putative mitochondrial transporter UCP3 (308 aa).

Over 1–10 the chain is Mitochondrial intermembrane; it reads MVGLQPSEVP. The helical transmembrane segment at 11–32 threads the bilayer; sequence PTTVVKFLGAGTAACFADLLTF. Solcar repeat units follow at residues 11 to 102, 111 to 202, and 211 to 296; these read PTTV…VKQF, SSVA…IKEK, and DNFP…LKRA. The Mitochondrial matrix portion of the chain corresponds to 33 to 73; that stretch reads PLDTAKVRLQIQGENPGAQSVQYRGVLGTILTMVRTEGPRS. Residues 74–96 traverse the membrane as a helical segment; sequence PYSGLVAGLHRQMSFASIRIGLY. Residues 97–116 are Mitochondrial intermembrane-facing; sequence DSVKQFYTPKGADHSSVAIR. A helical transmembrane segment spans residues 117 to 133; sequence ILAGCTTGAMAVTCAQP. Residues 134 to 179 are Mitochondrial matrix-facing; the sequence is TDVVKVRFQAMIRLGTGGERKYRGTMDAYRTIAREEGVRGLWKGTW. A helical membrane pass occupies residues 180 to 196; the sequence is PNITRNAIVNCAEMVTY. At 197–213 the chain is on the mitochondrial intermembrane side; it reads DIIKEKLLESHLFTDNF. A helical membrane pass occupies residues 214–233; sequence PCHFVSAFGAGFCATVVASP. Residues 234–267 lie on the Mitochondrial matrix side of the membrane; that stretch reads VDVVKTRYMNAPLGRYRSPLHCMLKMVAQEGPTA. The chain crosses the membrane as a helical span at residues 268-290; it reads FYKGFVPSFLRLGAWNVMMFVTY. The interval 275–297 is purine nucleotide binding; that stretch reads SFLRLGAWNVMMFVTYEQLKRAL. Over 291-308 the chain is Mitochondrial intermembrane; sequence EQLKRALMKVQVLRESPF.

It belongs to the mitochondrial carrier (TC 2.A.29) family. Interacts with HAX1; the interaction is direct and calcium-dependent.

It localises to the mitochondrion inner membrane. Inhibited by purine nucleotides and inorganic phosphate (in vitro). Functionally, putative transmembrane transporter that plays a role in mitochondrial metabolism via an as yet unclear mechanism. Originally, this mitochondrial protein was thought to act as a proton transmembrane transporter from the mitochondrial intermembrane space into the matrix, causing proton leaks through the inner mitochondrial membrane, thereby uncoupling mitochondrial membrane potential generation from ATP synthesis. However, this function is controversial and uncoupling may not be the function, or at least not the main function, but rather a consequence of more conventional metabolite transporter activity. In Mus musculus (Mouse), this protein is Putative mitochondrial transporter UCP3.